The sequence spans 512 residues: Retinaldehyde dehydrogenase 3 (512 aa).

The segment at 1–22 (MATTNGAVENGQPDGKPPALPR) is disordered. A2 carries the N-acetylalanine modification. NAD(+) contacts are provided by residues K204, E207, and 257-262 (GSTEVG). E280 (proton acceptor) is an active-site residue. The active-site Nucleophile is the C314. Residues Q361 and E411 each contribute to the NAD(+) site.

It belongs to the aldehyde dehydrogenase family. Homotetramer. Detected in embryonic head (at protein level). Ventral retina.

Its subcellular location is the cytoplasm. The enzyme catalyses retinal + NAD(+) + H2O = retinoate + NADH + 2 H(+). It carries out the reaction all-trans-retinal + NAD(+) + H2O = all-trans-retinoate + NADH + 2 H(+). The catalysed reaction is all-trans-13,14-dihydroretinal + NAD(+) + H2O = all-trans-13,14-dihydroretinoate + NADH + 2 H(+). It functions in the pathway cofactor metabolism; retinol metabolism. Its function is as follows. Catalyzes the NAD-dependent oxidation of aldehyde substrates, such as all-trans-retinal and all-trans-13,14-dihydroretinal, to their corresponding carboxylic acids, all-trans-retinoate and all-trans-13,14-dihydroretinoate, respectively. High specificity for all-trans-retinal as substrate, can also accept acetaldehyde as substrate in vitro but with lower affinity. Required for the biosynthesis of normal levels of retinoate in the embryonic ocular and nasal regions; a critical lipid in the embryonic development of the eye and the nasal region. The protein is Retinaldehyde dehydrogenase 3 (Aldh1a3) of Mus musculus (Mouse).